The following is a 499-amino-acid chain: Lysine--tRNA ligase (499 aa).

Residues glutamate 408 and glutamate 415 each contribute to the Mg(2+) site.

This sequence belongs to the class-II aminoacyl-tRNA synthetase family. Homodimer. Mg(2+) is required as a cofactor.

The protein resides in the cytoplasm. It catalyses the reaction tRNA(Lys) + L-lysine + ATP = L-lysyl-tRNA(Lys) + AMP + diphosphate. The polypeptide is Lysine--tRNA ligase (Bacillus cereus (strain AH820)).